We begin with the raw amino-acid sequence, 348 residues long: Dihydroorotase (348 aa).

Zn(2+) contacts are provided by H17 and H19. Substrate-binding positions include 19 to 21 (HLR) and N45. Zn(2+)-binding residues include K103, H140, and H178. K103 carries the N6-carboxylysine modification. H140 serves as a coordination point for substrate. L223 lines the substrate pocket. D251 is a binding site for Zn(2+). D251 is a catalytic residue. Residues H255 and A267 each coordinate substrate.

It belongs to the metallo-dependent hydrolases superfamily. DHOase family. Class II DHOase subfamily. As to quaternary structure, homodimer. It depends on Zn(2+) as a cofactor.

The catalysed reaction is (S)-dihydroorotate + H2O = N-carbamoyl-L-aspartate + H(+). Its pathway is pyrimidine metabolism; UMP biosynthesis via de novo pathway; (S)-dihydroorotate from bicarbonate: step 3/3. Its function is as follows. Catalyzes the reversible cyclization of carbamoyl aspartate to dihydroorotate. In Serratia proteamaculans (strain 568), this protein is Dihydroorotase.